The primary structure comprises 74 residues: MSTIWVVLIAIAALVAGVALGFFIARKYMMSYLKKNPPINEQMLRTLMMQMGQKPSQKKINQMMRAMNNQSGKE.

Residues 4–24 form a helical membrane-spanning segment; sequence IWVVLIAIAALVAGVALGFFI.

The protein belongs to the UPF0154 family.

The protein localises to the membrane. This chain is UPF0154 protein OB1676, found in Oceanobacillus iheyensis (strain DSM 14371 / CIP 107618 / JCM 11309 / KCTC 3954 / HTE831).